The primary structure comprises 279 residues: uncharacterized protein (279 aa).

Residues 1 to 19 (MKLKLYLIPLLASGIILSA) form the signal peptide. Cysteine 20 carries N-palmitoyl cysteine lipidation. Residue cysteine 20 is the site of S-diacylglycerol cysteine attachment.

The protein belongs to the MG439/MG440 family.

The protein resides in the cell membrane. This is an uncharacterized protein from Mycoplasma pneumoniae (strain ATCC 29342 / M129 / Subtype 1) (Mycoplasmoides pneumoniae).